The primary structure comprises 101 residues: DNA-binding protein Fis (101 aa).

Residues 77-96 (QTRAANMLGINRGTLRKKLK) constitute a DNA-binding region (H-T-H motif).

The protein belongs to the transcriptional regulatory Fis family. In terms of assembly, homodimer.

Activates ribosomal RNA transcription. Plays a direct role in upstream activation of rRNA promoters. This Shewanella pealeana (strain ATCC 700345 / ANG-SQ1) protein is DNA-binding protein Fis.